Consider the following 73-residue polypeptide: UPF0154 protein MG335.1 (73 aa).

Residues 6 to 26 (LALGLGIPLSLLVGMILGYFI) traverse the membrane as a helical segment.

This sequence belongs to the UPF0154 family.

The protein localises to the membrane. This Mycoplasma genitalium (strain ATCC 33530 / DSM 19775 / NCTC 10195 / G37) (Mycoplasmoides genitalium) protein is UPF0154 protein MG335.1.